A 293-amino-acid polypeptide reads, in one-letter code: Undecaprenyl-diphosphatase (293 aa).

The next 8 helical transmembrane spans lie at 3 to 23, 43 to 63, 85 to 105, 109 to 129, 178 to 198, 203 to 223, 238 to 258, and 269 to 289; these read IALA…EFLP, KGKI…CWEF, VNVI…GKWI, LFNP…ILLA, FALV…MLFG, VATE…TVYE, IFAV…RWLL, and FAWY…TGVI.

Belongs to the UppP family.

It is found in the cell inner membrane. It carries out the reaction di-trans,octa-cis-undecaprenyl diphosphate + H2O = di-trans,octa-cis-undecaprenyl phosphate + phosphate + H(+). In terms of biological role, catalyzes the dephosphorylation of undecaprenyl diphosphate (UPP). Confers resistance to bacitracin. This is Undecaprenyl-diphosphatase from Cupriavidus metallidurans (strain ATCC 43123 / DSM 2839 / NBRC 102507 / CH34) (Ralstonia metallidurans).